The primary structure comprises 189 residues: Thermostable direct hemolysin 1 (189 aa).

The N-terminal stretch at 1 to 24 (MKHQYFAKKSFLFISMLAAFKTSA) is a signal peptide. The cysteines at positions 175 and 185 are disulfide-linked.

This sequence belongs to the TDH hemolysin family. Homodimer.

Its function is as follows. Bacterial hemolysins are exotoxins that attack blood cell membranes and cause cell rupture by mechanisms not clearly defined. In Vibrio parahaemolyticus serotype O3:K6 (strain RIMD 2210633), this protein is Thermostable direct hemolysin 1 (tdh1).